We begin with the raw amino-acid sequence, 486 residues long: 2-succinylbenzoate--CoA ligase (486 aa).

Belongs to the ATP-dependent AMP-binding enzyme family. MenE subfamily.

The catalysed reaction is 2-succinylbenzoate + ATP + CoA = 2-succinylbenzoyl-CoA + AMP + diphosphate. The protein operates within quinol/quinone metabolism; 1,4-dihydroxy-2-naphthoate biosynthesis; 1,4-dihydroxy-2-naphthoate from chorismate: step 5/7. Its pathway is quinol/quinone metabolism; menaquinone biosynthesis. In terms of biological role, converts 2-succinylbenzoate (OSB) to 2-succinylbenzoyl-CoA (OSB-CoA). In Bacillus pumilus (strain SAFR-032), this protein is 2-succinylbenzoate--CoA ligase.